A 78-amino-acid chain; its full sequence is Metallothionein-like protein type 2 (78 aa).

The protein belongs to the metallothionein superfamily. Type 15 family.

Metallothioneins have a high content of cysteine residues that bind various heavy metals. The polypeptide is Metallothionein-like protein type 2 (Musa acuminata (Banana)).